A 435-amino-acid polypeptide reads, in one-letter code: MIIGKKPCSVCGEAGDGAHFGAEACRACAAFFRRSVALNKAYVCRAMGACIIQKNVRCMCRACRFSKCMSVGMRKSAVQRHRELFGRQDSSDGSNPRVSPSTSWPMDVSPVNIEEPGMATLNCLNENYTHMSNVRRVIHNTGSGNIFNPREPKAVAYTDAHSVHLKEIGLVADWIIKSYPDFQKVHQEQKKLLYRNFFLPFMILECGYHCCLNDRTDILFLPSGDFIDCSRPETFYGSHINSHLMSPEEAIRMFVPSFEIYRRNVLDPMRREKVDNYEFFTLCSLVLWDHGLEGQIDECVNMARHNRERILREILYYYRRVKQIPDPSMRLANLLVLLPALQRSVRRFQEDVEITHVFNVYSVEETFYELVSGRLSDGFFQKATQLDATPEEMKEIKKEVECVWDLNTSQVVDLYDLPPTSFLTPTSSTPSSTEM.

The segment at residues 5–80 is a DNA-binding region (nuclear receptor); it reads KKPCSVCGEA…VGMRKSAVQR (76 aa). 2 consecutive NR C4-type zinc fingers follow at residues 8 to 28 and 44 to 63; these read CSVC…CRAC and CRAM…CRAC. Residues 84–106 form a disordered region; that stretch reads LFGRQDSSDGSNPRVSPSTSWPM. Positions 91–104 are enriched in polar residues; the sequence is SDGSNPRVSPSTSW. The 262-residue stretch at 113 to 374 folds into the NR LBD domain; it reads IEEPGMATLN…ETFYELVSGR (262 aa).

The protein belongs to the nuclear hormone receptor family.

Its subcellular location is the nucleus. Its function is as follows. Orphan nuclear receptor. The sequence is that of Nuclear hormone receptor family member nhr-28 from Caenorhabditis briggsae.